Consider the following 98-residue polypeptide: Large ribosomal subunit protein bL28 (98 aa).

Belongs to the bacterial ribosomal protein bL28 family.

This chain is Large ribosomal subunit protein bL28, found in Phenylobacterium zucineum (strain HLK1).